Reading from the N-terminus, the 165-residue chain is Ribosomal RNA large subunit methyltransferase H (165 aa).

S-adenosyl-L-methionine is bound at residue Gly109.

The protein belongs to the RNA methyltransferase RlmH family. As to quaternary structure, homodimer.

It localises to the cytoplasm. The catalysed reaction is pseudouridine(1915) in 23S rRNA + S-adenosyl-L-methionine = N(3)-methylpseudouridine(1915) in 23S rRNA + S-adenosyl-L-homocysteine + H(+). In terms of biological role, specifically methylates the pseudouridine at position 1915 (m3Psi1915) in 23S rRNA. The polypeptide is Ribosomal RNA large subunit methyltransferase H (Methylorubrum extorquens (strain CM4 / NCIMB 13688) (Methylobacterium extorquens)).